A 486-amino-acid polypeptide reads, in one-letter code: uncharacterized protein (486 aa).

Residues 7–28 (HVISIFETVGAYFINIFYNFLY) traverse the membrane as a helical segment. 3 N-linked (GlcNAc...) asparagine; by host glycosylation sites follow: asparagine 73, asparagine 83, and asparagine 195. A coiled-coil region spans residues 183–233 (ELEETYARLSSYNRSLLYQIEELTSEKKSFLEELSTLRKKYEKRQSEYRRL). Residues 299-329 (SQEVTSKSPNNYPVPQSRTIVNKPSDNYPVP) form a disordered region. The segment covering 300-323 (QEVTSKSPNNYPVPQSRTIVNKPS) has biased composition (polar residues). N-linked (GlcNAc...) asparagine; by host glycosylation is present at asparagine 461.

The protein belongs to the asfivirus B475L family.

Its subcellular location is the host membrane. This is an uncharacterized protein from Ornithodoros (relapsing fever ticks).